A 680-amino-acid polypeptide reads, in one-letter code: Structure-specific endonuclease subunit SLX4 (680 aa).

3 disordered regions span residues 15-92, 141-183, and 450-490; these read EVAK…EPVV, ESSS…STQQ, and LGSG…ATRL. A compositionally biased stretch (acidic residues) spans 22-33; the sequence is DSDEPIIDEDDL. Over residues 60 to 86 the composition is skewed to basic and acidic residues; it reads NNSKDTFKETPLELVDKEEAIEDKAPN. Residues 156-174 are compositionally biased toward basic residues; that stretch reads LKSKKITKPKLTKTSKRTK. Residues 473-490 are compositionally biased toward polar residues; it reads TVISRSPQSTRTPQATRL.

This sequence belongs to the SLX4 family. Forms a heterodimer with SLX1. In terms of processing, phosphorylated in response to DNA damage.

It is found in the nucleus. In terms of biological role, regulatory subunit of the SLX1-SLX4 structure-specific endonuclease that resolves DNA secondary structures generated during DNA repair and recombination. Has endonuclease activity towards branched DNA substrates, introducing single-strand cuts in duplex DNA close to junctions with ss-DNA. This chain is Structure-specific endonuclease subunit SLX4, found in Vanderwaltozyma polyspora (strain ATCC 22028 / DSM 70294 / BCRC 21397 / CBS 2163 / NBRC 10782 / NRRL Y-8283 / UCD 57-17) (Kluyveromyces polysporus).